We begin with the raw amino-acid sequence, 150 residues long: Regulatory protein RecX (150 aa).

This sequence belongs to the RecX family.

It localises to the cytoplasm. Its function is as follows. Modulates RecA activity. This is Regulatory protein RecX from Ectopseudomonas mendocina (strain ymp) (Pseudomonas mendocina).